The primary structure comprises 277 residues: MSKSLKKLVEESREKNQPEVDMSDRGISNMLDVNGLFTLSHITQLVLSHNKLTMVPPNIAELKNLEVLNFFNNQIEELPTQISSLQKLKHLNLGMNRLNTLPRGFGSLPALEVLDLTYNNLSENSLPGNFFYLTTLRALYLSDNDFEILPPDIGKLTKLQILSLRDNDLISLPKEIGELTQLKELHIQGNRLTVLPPELGNLDLTGQKQVFKAENNPWVTPIADQFQLGVSHVFEYIRSETYKYLYGRHMQANPEPPKKNNDKSKKISRKPLAAKNR.

Residues 1 to 24 are disordered; that stretch reads MSKSLKKLVEESREKNQPEVDMSD. An N-acetylserine modification is found at Ser-2. Residues 7-24 show a composition bias toward basic and acidic residues; it reads KLVEESREKNQPEVDMSD. LRR repeat units follow at residues 41–63, 64–85, 87–109, 110–133, 135–156, 158–179, and 181–202; these read HITQ…AELK, NLEV…ISSL, KLKH…GSLP, ALEV…FFYL, TLRA…IGKL, KLQI…IGEL, and QLKE…LGNL. The segment at 250 to 277 is disordered; the sequence is MQANPEPPKKNNDKSKKISRKPLAAKNR. Positions 256–265 are enriched in basic and acidic residues; that stretch reads PPKKNNDKSK.

Functionally, potentially plays a role in the Ras signal transduction pathway. Capable of suppressing v-Ras transformation in vitro. This is Ras suppressor protein 1 (RSU1) from Homo sapiens (Human).